Consider the following 132-residue polypeptide: Phosphomevalonate dehydratase small subunit (132 aa).

The Proton acceptor role is filled by Ser58.

It belongs to the AcnX type II small subunit family. Heterodimer composed of a large subunit (PMDh-L) and a small subunit (PMDh-S).

The enzyme catalyses (R)-5-phosphomevalonate = (2E)-3-methyl-5-phosphooxypent-2-enoate + H2O. The protein operates within isoprenoid biosynthesis; isopentenyl diphosphate biosynthesis via mevalonate pathway. Its activity is regulated as follows. Neither the addition of 1 mM Mg(2+) nor 1 mM Mn(2+) has a significant effect on the activity, whereas Zn(2+) causes almost complete inactivation. Strongly inhibited by H(2)O(2), but not by EDTA or iodoacetamide. Its function is as follows. Component of a hydro-lyase that catalyzes the dehydration of mevalonate 5-phosphate (MVA5P) to form trans-anhydromevalonate 5-phosphate (tAHMP). Involved in the archaeal mevalonate (MVA) pathway, which provides fundamental precursors for isoprenoid biosynthesis, such as isopentenyl diphosphate (IPP) and dimethylallyl diphosphate (DMAPP). The sequence is that of Phosphomevalonate dehydratase small subunit from Aeropyrum pernix (strain ATCC 700893 / DSM 11879 / JCM 9820 / NBRC 100138 / K1).